A 401-amino-acid polypeptide reads, in one-letter code: Imidazolonepropionase (401 aa).

2 residues coordinate Fe(3+): His-70 and His-72. Zn(2+)-binding residues include His-70 and His-72. The 4-imidazolone-5-propanoate site is built by Arg-79, Tyr-142, and His-175. Residue Tyr-142 coordinates N-formimidoyl-L-glutamate. A Fe(3+)-binding site is contributed by His-240. His-240 provides a ligand contact to Zn(2+). Gln-243 is a binding site for 4-imidazolone-5-propanoate. Asp-315 is a Fe(3+) binding site. Asp-315 contributes to the Zn(2+) binding site. N-formimidoyl-L-glutamate-binding residues include Asn-317 and Gly-319. Ser-320 is a binding site for 4-imidazolone-5-propanoate.

It belongs to the metallo-dependent hydrolases superfamily. HutI family. It depends on Zn(2+) as a cofactor. Requires Fe(3+) as cofactor.

The protein localises to the cytoplasm. It carries out the reaction 4-imidazolone-5-propanoate + H2O = N-formimidoyl-L-glutamate. The protein operates within amino-acid degradation; L-histidine degradation into L-glutamate; N-formimidoyl-L-glutamate from L-histidine: step 3/3. In terms of biological role, catalyzes the hydrolytic cleavage of the carbon-nitrogen bond in imidazolone-5-propanoate to yield N-formimidoyl-L-glutamate. It is the third step in the universal histidine degradation pathway. This is Imidazolonepropionase from Ruegeria pomeroyi (strain ATCC 700808 / DSM 15171 / DSS-3) (Silicibacter pomeroyi).